The primary structure comprises 452 residues: Acetyl-CoA decarbonylase/synthase complex subunit delta (452 aa).

This sequence belongs to the CdhD family. In terms of assembly, heterodimer of delta and gamma chains. The ACDS complex is made up of alpha, epsilon, beta, gamma and delta chains with a probable stoichiometry of (alpha(2)epsilon(2))(4)-beta(8)-(gamma(1)delta(1))(8).

Functionally, part of a complex that catalyzes the reversible cleavage of acetyl-CoA, allowing autotrophic growth from CO(2). Probably maintains the overall quaternary structure of the ACDS complex. The sequence is that of Acetyl-CoA decarbonylase/synthase complex subunit delta from Archaeoglobus fulgidus (strain ATCC 49558 / DSM 4304 / JCM 9628 / NBRC 100126 / VC-16).